The following is a 167-amino-acid chain: Peptidyl-prolyl cis-trans isomerase-like 3 (167 aa).

The region spanning 1–160 (MSVTLHTSHG…EPVRIENVTI (160 aa)) is the PPIase cyclophilin-type domain.

This sequence belongs to the cyclophilin-type PPIase family. PPIL3 subfamily.

The catalysed reaction is [protein]-peptidylproline (omega=180) = [protein]-peptidylproline (omega=0). In terms of biological role, PPIases accelerate the folding of proteins. It catalyzes the cis-trans isomerization of proline imidic peptide bonds in oligopeptides. This chain is Peptidyl-prolyl cis-trans isomerase-like 3 (CYP10), found in Gibberella zeae (strain ATCC MYA-4620 / CBS 123657 / FGSC 9075 / NRRL 31084 / PH-1) (Wheat head blight fungus).